The chain runs to 317 residues: D-alanine--D-alanine ligase (317 aa).

Residues 103 to 299 form the ATP-grasp domain; sequence KHIFRSLNID…FNELVKIIIE (197 aa). Residue 130-183 participates in ATP binding; that stretch reads KIDYPYVLKPINEGSSIGVYIIFSHEDYLELKDNSSTIMEKMIVEEYIPGIELH. The Mg(2+) site is built by D251, E265, and N267.

It belongs to the D-alanine--D-alanine ligase family. Mg(2+) is required as a cofactor. Mn(2+) serves as cofactor.

Its subcellular location is the cytoplasm. The catalysed reaction is 2 D-alanine + ATP = D-alanyl-D-alanine + ADP + phosphate + H(+). Its pathway is cell wall biogenesis; peptidoglycan biosynthesis. In terms of biological role, cell wall formation. The sequence is that of D-alanine--D-alanine ligase from Wolbachia sp. subsp. Drosophila simulans (strain wRi).